A 580-amino-acid chain; its full sequence is CRISPR-associated exonuclease Cas4/endonuclease Cas1 fusion (580 aa).

The interval 1–223 (MAPSDTPPSA…RCSLLPICLP (223 aa)) is CRISPR-associated exonuclease Cas4. Cys44 is a [4Fe-4S] cluster binding site. Residues Asp112 and Glu125 each coordinate Mn(2+). 3 residues coordinate [4Fe-4S] cluster: Cys212, Cys215, and Cys221. The interval 248–580 (LYGQTPGARI…IPRYPHYCPR (333 aa)) is CRISPR-associated endonuclease Cas1. Residues Glu401, His472, and Glu487 each contribute to the Mn(2+) site.

In the N-terminal section; belongs to the CRISPR-associated exonuclease Cas4 family. The protein in the C-terminal section; belongs to the CRISPR-associated endonuclease Cas1 family. Homodimer, forms a heterotetramer with a Cas2 homodimer. Requires [4Fe-4S] cluster as cofactor. Mg(2+) serves as cofactor. The cofactor is Mn(2+).

The catalysed reaction is exonucleolytic cleavage in the 5'- to 3'-direction to yield nucleoside 3'-phosphates.. Its function is as follows. CRISPR (clustered regularly interspaced short palindromic repeat), is an adaptive immune system that provides protection against mobile genetic elements (viruses, transposable elements and conjugative plasmids). CRISPR clusters contain spacers, sequences complementary to antecedent mobile elements, and target invading nucleic acids. CRISPR clusters are transcribed and processed into CRISPR RNA (crRNA). The Cas4 region acts as a ssDNA exonuclease, while the Cas1 region acts as a dsDNA endonuclease. Involved in the integration of spacer DNA into the CRISPR cassette. The sequence is that of CRISPR-associated exonuclease Cas4/endonuclease Cas1 fusion (cas4-cas1) from Rhodospirillum rubrum (strain ATCC 11170 / ATH 1.1.1 / DSM 467 / LMG 4362 / NCIMB 8255 / S1).